We begin with the raw amino-acid sequence, 171 residues long: Adenine phosphoribosyltransferase (171 aa).

The protein belongs to the purine/pyrimidine phosphoribosyltransferase family. As to quaternary structure, homodimer.

It is found in the cytoplasm. It catalyses the reaction AMP + diphosphate = 5-phospho-alpha-D-ribose 1-diphosphate + adenine. Its pathway is purine metabolism; AMP biosynthesis via salvage pathway; AMP from adenine: step 1/1. Functionally, catalyzes a salvage reaction resulting in the formation of AMP, that is energically less costly than de novo synthesis. The polypeptide is Adenine phosphoribosyltransferase (Natranaerobius thermophilus (strain ATCC BAA-1301 / DSM 18059 / JW/NM-WN-LF)).